We begin with the raw amino-acid sequence, 359 residues long: tRNA-specific 2-thiouridylase MnmA (359 aa).

ATP-binding positions include 6 to 13 (AMSGGVDS) and leucine 32. Cysteine 97 (nucleophile) is an active-site residue. Cysteine 97 and cysteine 195 are oxidised to a cystine. Glycine 121 is an ATP binding site. The interval 144–146 (KDQ) is interaction with tRNA. Cysteine 195 functions as the Cysteine persulfide intermediate in the catalytic mechanism.

It belongs to the MnmA/TRMU family.

It localises to the cytoplasm. It carries out the reaction S-sulfanyl-L-cysteinyl-[protein] + uridine(34) in tRNA + AH2 + ATP = 2-thiouridine(34) in tRNA + L-cysteinyl-[protein] + A + AMP + diphosphate + H(+). In terms of biological role, catalyzes the 2-thiolation of uridine at the wobble position (U34) of tRNA, leading to the formation of s(2)U34. This chain is tRNA-specific 2-thiouridylase MnmA, found in Tropheryma whipplei (strain Twist) (Whipple's bacillus).